A 402-amino-acid polypeptide reads, in one-letter code: Shaggy-related protein kinase GSK2 (402 aa).

The segment at Met1–Asn38 is disordered. Residues Tyr63–Phe347 enclose the Protein kinase domain. ATP is bound by residues Val69–Val77 and Lys92. The active-site Proton acceptor is Asp188.

It belongs to the protein kinase superfamily. CMGC Ser/Thr protein kinase family. GSK-3 subfamily. In terms of assembly, interacts with DLT. Interacts with OFP8. Interacts with GRF4. Interacts with PUB24. Interacts with SMOS1. In terms of processing, autophosphorylated. In terms of tissue distribution, expressed in lamina joints, vascular tissue and nodes.

It localises to the cytoplasm. The protein resides in the nucleus. It carries out the reaction L-seryl-[protein] + ATP = O-phospho-L-seryl-[protein] + ADP + H(+). It catalyses the reaction L-threonyl-[protein] + ATP = O-phospho-L-threonyl-[protein] + ADP + H(+). In terms of biological role, serine-threonine kinase that acts as a negative regulator of brassinosteroid (BR) signaling. Phosphorylates DLT and BZR1, two positive regulators that mediates several BR responses. Phosphorylation of DLT and BZR1 inhibits their activities in BR signaling. Phosphorylates OFP8, a positive regulator of BR responses. Phosphorylated OFP8 shuttles from the nucleus to the cytoplasm where it is degraded by the proteasome. Phosphorylates the E3 ubiquitin-protein ligase PUB24, a negative regulator of BR signaling, which targets BZR1 and promotes its degradation via the 26S proteasome. Phosphorylation of PUB24 increases its stability. Phosphorylates the AP2-ERF transcription factor SMOS1, a positive regulator of BR signaling, which cooperatively functions in a transactivating complex with BZR1 to enhance the transcription of BR biosynthetic genes. Phosphorylation of SMOS1 leads to its degradation by an unknown mechanism. This chain is Shaggy-related protein kinase GSK2, found in Oryza sativa subsp. japonica (Rice).